A 231-amino-acid polypeptide reads, in one-letter code: Large ribosomal subunit protein uL1 (231 aa).

Belongs to the universal ribosomal protein uL1 family. As to quaternary structure, part of the 50S ribosomal subunit.

Functionally, binds directly to 23S rRNA. The L1 stalk is quite mobile in the ribosome, and is involved in E site tRNA release. In terms of biological role, protein L1 is also a translational repressor protein, it controls the translation of the L11 operon by binding to its mRNA. This is Large ribosomal subunit protein uL1 from Mycoplasmopsis agalactiae (strain NCTC 10123 / CIP 59.7 / PG2) (Mycoplasma agalactiae).